The sequence spans 130 residues: Osteocrin (130 aa).

Positions 1 to 25 (MLDWRLASTHFILAMIVMLWGSGKA) are cleaved as a signal peptide. Arg-129 is subject to Arginine amide.

It belongs to the Osteocrin family. In terms of assembly, interacts with NPR3. Expressed in skeletal muscle and to a much lesser extent in bone, brown adipose tissue, spleen and testis. Not expressed in neurons.

Its subcellular location is the secreted. Functionally, hormone that acts as a ligand for natriuretic peptide receptor NPR3/NPR-C and promotes bone growth and physical endurance in muscle. Acts as a regulator of osteoblast differentiation and bone growth by binding to natriuretic peptide receptor NPR3/NPR-C, thereby preventing binding between NPR3/NPR-C and natriuretic peptides, leading to increase cGMP production. Required to enhance physical endurance: induced following physical exercise in muscle and promotes cGMP production, probably by interacting with NPR3/NPR-C. May act as an autocrine and paracrine factor linked to glucose metabolism in skeletal muscle. The protein is Osteocrin of Mus musculus (Mouse).